The chain runs to 301 residues: Oxygen-dependent coproporphyrinogen-III oxidase (301 aa).

Positions 49 to 58 (VMVDGAVIEK) are important for dimerization. Ser93 is a binding site for substrate. His107 acts as the Proton donor in catalysis. Substrate is bound by residues 109 to 111 (NVR) and 259 to 261 (GGR). Residues 241–276 (YAEFNLVIDRGTKFGLQSGGRTESILISLPPRARWG) are important for dimerization.

This sequence belongs to the aerobic coproporphyrinogen-III oxidase family. As to quaternary structure, homodimer.

It localises to the cytoplasm. It carries out the reaction coproporphyrinogen III + O2 + 2 H(+) = protoporphyrinogen IX + 2 CO2 + 2 H2O. It participates in porphyrin-containing compound metabolism; protoporphyrin-IX biosynthesis; protoporphyrinogen-IX from coproporphyrinogen-III (O2 route): step 1/1. Involved in the heme biosynthesis. Catalyzes the aerobic oxidative decarboxylation of propionate groups of rings A and B of coproporphyrinogen-III to yield the vinyl groups in protoporphyrinogen-IX. This Leishmania major protein is Oxygen-dependent coproporphyrinogen-III oxidase.